The primary structure comprises 509 residues: 3-octaprenyl-4-hydroxybenzoate carboxy-lyase (509 aa).

A Mn(2+)-binding site is contributed by N179. Residues 182–184 (IYR), 196–198 (RWL), and 201–202 (RG) each bind prenylated FMN. E245 serves as a coordination point for Mn(2+). The active-site Proton donor is the D304.

Belongs to the UbiD family. In terms of assembly, homohexamer. Prenylated FMN serves as cofactor. Requires Mn(2+) as cofactor.

Its subcellular location is the cell membrane. It carries out the reaction a 4-hydroxy-3-(all-trans-polyprenyl)benzoate + H(+) = a 2-(all-trans-polyprenyl)phenol + CO2. The protein operates within cofactor biosynthesis; ubiquinone biosynthesis. In terms of biological role, catalyzes the decarboxylation of 3-octaprenyl-4-hydroxy benzoate to 2-octaprenylphenol, an intermediate step in ubiquinone biosynthesis. This Cupriavidus pinatubonensis (strain JMP 134 / LMG 1197) (Cupriavidus necator (strain JMP 134)) protein is 3-octaprenyl-4-hydroxybenzoate carboxy-lyase.